The chain runs to 299 residues: MTLNSDADPDDPEPAAPARDLSKPASKPARSTRKSSSAKSAQGAEGEPRKTPGRRAPRTPASDYRIAEQPAFVLHSYPYRETSLIIDVLSRDHGRLALVAKGAKRPHSALRGVLQTFQPLALSWSGKSEVRTLTGAEWVGGMLPLTGGALLCGFYVNELLVKFCAREDPHPQLFHHYVVTMTRLAHDEPPVQVLRSFERVLLRETGYAMALDRTVARKAVLAEGRYVFDPERGVREAADDLPAQWPVIAGQTLLDMEQDDYHRAQTVAQSKTLMRFLLNTYLGGTPLATRQILIDLQNL.

The disordered stretch occupies residues 1 to 62; that stretch reads MTLNSDADPD…GRRAPRTPAS (62 aa). The span at 25 to 41 shows a compositional bias: low complexity; the sequence is ASKPARSTRKSSSAKSA.

It belongs to the RecO family.

Functionally, involved in DNA repair and RecF pathway recombination. The chain is DNA repair protein RecO from Paraburkholderia xenovorans (strain LB400).